Here is a 154-residue protein sequence, read N- to C-terminus: Prefoldin subunit 5 (154 aa).

A2 is subject to N-acetylalanine. K42 carries the N6-acetyllysine modification. Residue S56 is modified to Phosphoserine.

Belongs to the prefoldin subunit alpha family. In terms of assembly, heterohexamer of two PFD-alpha type and four PFD-beta type subunits.

The protein localises to the nucleus. In terms of biological role, binds specifically to cytosolic chaperonin (c-CPN) and transfers target proteins to it. Binds to nascent polypeptide chain and promotes folding in an environment in which there are many competing pathways for nonnative proteins. Represses the transcriptional activity of MYC. The polypeptide is Prefoldin subunit 5 (PFDN5) (Pongo abelii (Sumatran orangutan)).